The primary structure comprises 60 residues: UPF0434 protein ETA_21370 (60 aa).

Belongs to the UPF0434 family.

The protein is UPF0434 protein ETA_21370 of Erwinia tasmaniensis (strain DSM 17950 / CFBP 7177 / CIP 109463 / NCPPB 4357 / Et1/99).